We begin with the raw amino-acid sequence, 415 residues long: Neuromedin-U receptor 2 (415 aa).

The Extracellular portion of the chain corresponds to M1–S49. N-linked (GlcNAc...) asparagine glycosylation is found at N9 and N27. Residues V50–I70 form a helical membrane-spanning segment. Residues L71–Y82 lie on the Cytoplasmic side of the membrane. Residues Y83–V103 form a helical membrane-spanning segment. At Y104–T123 the chain is on the extracellular side. C119 and C204 are joined by a disulfide. The helical transmembrane segment at A124–V146 threads the bilayer. The Cytoplasmic portion of the chain corresponds to A147–R165. Residues I166–G186 traverse the membrane as a helical segment. The Extracellular segment spans residues I187 to N214. The N-linked (GlcNAc...) asparagine glycan is linked to N194. A helical membrane pass occupies residues F215–L235. The Cytoplasmic portion of the chain corresponds to Y236–S265. A helical transmembrane segment spans residues V266–I286. Residues D287–L301 are Extracellular-facing. A helical membrane pass occupies residues A302–V322. Residues N323–T415 are Cytoplasmic-facing.

It belongs to the G-protein coupled receptor 1 family. Predominantly expressed in the CNS, particularly in the medulla oblongata, pontine reticular formation, spinal cord, and thalamus. High level in testis whereas lower levels are present in a variety of peripheral tissues including the gastrointestinal tract, genitourinary tract, liver, pancreas, adrenal gland, thyroid gland, lung, trachea, spleen and thymus.

The protein resides in the cell membrane. Receptor for the neuromedin-U and neuromedin-S neuropeptides. In Homo sapiens (Human), this protein is Neuromedin-U receptor 2 (NMUR2).